We begin with the raw amino-acid sequence, 204 residues long: Peptide deformylase (204 aa).

Residues cysteine 131 and histidine 174 each contribute to the Fe cation site. Glutamate 175 is a catalytic residue. Residue histidine 178 coordinates Fe cation.

It belongs to the polypeptide deformylase family. The cofactor is Fe(2+).

It catalyses the reaction N-terminal N-formyl-L-methionyl-[peptide] + H2O = N-terminal L-methionyl-[peptide] + formate. Its function is as follows. Removes the formyl group from the N-terminal Met of newly synthesized proteins. Requires at least a dipeptide for an efficient rate of reaction. N-terminal L-methionine is a prerequisite for activity but the enzyme has broad specificity at other positions. The sequence is that of Peptide deformylase from Streptococcus agalactiae serotype III (strain NEM316).